The primary structure comprises 772 residues: Angiomotin-like protein 2 (772 aa).

Disordered stretches follow at residues 41–158, 170–239, and 260–299; these read GGAG…HVRS, RNGA…SPHF, and QYQY…PSAQ. Composition is skewed to basic and acidic residues over residues 80 to 91, 100 to 112, and 142 to 153; these read QGGETHLAENRL, KGEE…EAKA, and RRQDEALRELRH. Residues 101–303 form a required for interaction with CDH5 region; that stretch reads GEELPTYEEA…GPPSAQATLG (203 aa). A Phosphotyrosine; by FGFR1 modification is found at Y107. Residues 178-191 are compositionally biased toward polar residues; sequence HMSSSHSFPQLARS. Positions 197–214 are enriched in pro residues; that stretch reads PRGPPAEGPEPRGPPPQY. The required for interaction with CDH1 stretch occupies residues 221–303; that stretch reads QETAAVTDPR…GPPSAQATLG (83 aa). A coiled-coil region spans residues 305 to 578; the sequence is AHLAQMETVL…KYLEERAMRQ (274 aa). Residues K343 and K404 each participate in a glycyl lysine isopeptide (Lys-Gly) (interchain with G-Cter in ubiquitin) cross-link. Disordered stretches follow at residues 596–615 and 680–752; these read IRHS…LLPG and GLVS…RTPS. A compositionally biased stretch (basic and acidic residues) spans 686 to 699; it reads RQTDARPAGDRVPA. Residues 718-733 show a composition bias toward polar residues; the sequence is DGSTQTDGPADNTSAC. S752 and S755 each carry phosphoserine. Residues 769 to 772 carry the PDZ-binding motif; that stretch reads EILI.

It belongs to the angiomotin family. Part of a complex composed of AMOTL2, MAGI1 and CDH5, within the complex AMOTL2 acts as a scaffold protein for the interaction of MAGI1 with CDH5. The complex is required for coupling actin fibers to cell junctions in endothelial cells. Within the complex AMOTL2 (via its N-terminus) interacts with CDH5. Interacts (via N-terminus) with MAGI1. Interacts (via N-terminus) with ACTB; the interaction facilitates binding of cell junction complexes to actin fibers in endothelial cells. Interacts with CDH1; the interaction may facilitate binding of radial actin fibers to cell junction complexes. Interacts with SRC. Interacts with YAP1; the interaction is required for ubiquitination of AMOTL2 and localization of YAP1 to tight junctions. Interacts with WWP1; the interaction facilitates WWP1 interaction with the Crumbs complex and subsequent WWP1 translocation to the plasma membrane. WWP1 interaction with the Crumbs complex promotes WWP1 monoubiquitination of AMOTL2 which subsequently activates the Hippo signaling pathway. When ubiquitinated interacts with LATS2 (via UBA domain); the interaction promotes LATS2 phosphorylation of YAP1. Interacts (via PPXY motif) with WWTR1/TAZ (via WW domain); the interaction promotes WWTR1/TAZ localization to the cytoplasm and thereby inhibition of its transcriptional properties. Interacts with PHLDB2; interaction may facilitate PHLDB2 localization to the myotube podosome cortex that surrounds the core. Phosphorylation at Tyr-107 is necessary for efficient binding to SRC and synergistically functioning with SRC to activate the downstream MAPK pathway. Post-translationally, monoubiquitinated at Lys-343 and Lys-404 by Crumbs complex-bound WWP1. De-ubiquitinated at Lys-343 and Lys-404 by USP9X; the interaction may be promoted by cell contact inhibition. Deubiquitination of AMOTL2 negatively regulates Hippo signaling activation. Expressed in skeletal muscle at neuromuscular junctions (at protein level).

Its subcellular location is the recycling endosome. It is found in the cytoplasm. The protein resides in the cell projection. The protein localises to the podosome. It localises to the cell junction. Functionally, regulates the translocation of phosphorylated SRC to peripheral cell-matrix adhesion sites. Required for proper architecture of actin filaments. Plays a role in coupling actin fibers to cell junctions in endothelial cells and is therefore required for correct endothelial cell morphology via facilitating transcellular transmission of mechanical force resulting in endothelial cell elongation. Required for the anchoring of radial actin fibers to CDH1 junction complexes at the cell membrane which facilitates organization of radial actin fiber structure and cellular response to contractile forces. This contributes to maintenance of cell area, size, shape, epithelial sheet organization and trophectoderm cell properties that facilitate blastocyst zona hatching. Inhibits the Wnt/beta-catenin signaling pathway, probably by recruiting CTNNB1 to recycling endosomes and hence preventing its translocation to the nucleus. Participates in angiogenesis. Activates the Hippo signaling pathway in response to cell contact inhibition via interaction with and ubiquitination by Crumbs complex-bound WWP1. Ubiquitinated AMOTL2 then interacts with LATS2 which in turn phosphorylates YAP1, excluding it from the nucleus and localizing it to the cytoplasm and tight junctions, therefore ultimately repressing YAP1-driven transcription of target genes. Acts to inhibit WWTR1/TAZ transcriptional coactivator activity via sequestering WWTR1/TAZ in the cytoplasm and at tight junctions. Regulates the size and protein composition of the podosome cortex and core at myofibril neuromuscular junctions. Selectively promotes FGF-induced MAPK activation through SRC. May play a role in the polarity, proliferation and migration of endothelial cells. This chain is Angiomotin-like protein 2, found in Mus musculus (Mouse).